The chain runs to 331 residues: UDP-GalNAc:beta-1,3-N-acetylgalactosaminyltransferase 1 (331 aa).

Residues 1–20 (MAPAVLTALPNRMSLRSLKW) are Cytoplasmic-facing. The helical; Signal-anchor for type II membrane protein transmembrane segment at 21–43 (SLLLLSLLSFLVIWYLSLPHYNV) threads the bilayer. Over 44–331 (IERVNWMYFY…VMLRNTTCHY (288 aa)) the chain is Lumenal. N-linked (GlcNAc...) asparagine glycans are attached at residues Asn72, Asn154, Asn198, Asn212, and Asn326.

The protein belongs to the glycosyltransferase 31 family. Mg(2+) is required as a cofactor. In terms of tissue distribution, detected in brain, ovary, kidney, uterus and stomach. In ovary, specifically expressed in follicular granulosa cells and shows particularly strong expression at later stages of follicle development.

The protein resides in the golgi apparatus membrane. It carries out the reaction a globoside Gb3Cer (d18:1(4E)) + UDP-N-acetyl-alpha-D-galactosamine = a globoside Gb4Cer (d18:1(4E)) + UDP + H(+). It participates in protein modification; protein glycosylation. In terms of biological role, transfers N-acetylgalactosamine onto globotriaosylceramide. Plays a critical role in preimplantation stage embryonic development. In Mus musculus (Mouse), this protein is UDP-GalNAc:beta-1,3-N-acetylgalactosaminyltransferase 1.